The primary structure comprises 877 residues: Alpha-glucosidase (877 aa).

The first 23 residues, 1–23 (MATVGVLLLCLCLCLFAPRLCSS), serve as a signal peptide directing secretion. Residues 89 to 115 (VPQDIIPRPAPGDVLHDAPPASSAPLQ) form a disordered region. Asparagine 191, asparagine 298, asparagine 338, and asparagine 391 each carry an N-linked (GlcNAc...) asparagine glycan. Residues aspartate 437 and glutamate 440 contribute to the active site. A glycan (N-linked (GlcNAc...) asparagine) is linked at asparagine 471. Residue aspartate 534 is the Proton donor of the active site. Asparagine 570 carries an N-linked (GlcNAc...) asparagine glycan.

Belongs to the glycosyl hydrolase 31 family. High levels seen in the aleurone and scutellum after germination, while low levels are found in developing seeds.

It carries out the reaction Hydrolysis of terminal, non-reducing (1-&gt;4)-linked alpha-D-glucose residues with release of alpha-D-glucose.. The protein is Alpha-glucosidase of Hordeum vulgare (Barley).